The primary structure comprises 233 residues: Large ribosomal subunit protein uL1 (233 aa).

This sequence belongs to the universal ribosomal protein uL1 family. In terms of assembly, part of the 50S ribosomal subunit.

Functionally, binds directly to 23S rRNA. The L1 stalk is quite mobile in the ribosome, and is involved in E site tRNA release. Protein L1 is also a translational repressor protein, it controls the translation of the L11 operon by binding to its mRNA. The protein is Large ribosomal subunit protein uL1 of Parvibaculum lavamentivorans (strain DS-1 / DSM 13023 / NCIMB 13966).